Reading from the N-terminus, the 285-residue chain is Trypsin Tyr p 3.0101 (285 aa).

The signal sequence occupies residues 1-16; sequence MKILLFLCFLVSVAFA. The propeptide occupies 17–33; that stretch reads KPPTIQLKSNTKSQNGF. The Peptidase S1 domain maps to 34 to 262; that stretch reads IVGGTEAVDG…YLDWIELSAK (229 aa). Cys58 and Cys74 form a disulfide bridge. Active-site charge relay system residues include His73 and Asp120. Cystine bridges form between Cys186/Cys202 and Cys214/Cys238. Ser218 (charge relay system) is an active-site residue.

The protein belongs to the peptidase S1 family.

The protein localises to the secreted. The enzyme catalyses Preferential cleavage: Arg-|-Xaa, Lys-|-Xaa.. Inhibited by the serine protease inhibitor phenylmethylsulfonyl, and trypsin inhibitors soybean trypsin inhibitor and tosyllysine chloromethyl ketone. Not inhibited by dithiothreitol, a cysteine protease inhibitor. Digests TAMe (p-toluene arginine methyl ester), but not ethyl N-benzoyl-L-tyrosinate (BTEE). In Tyrophagus putrescentiae (Mold mite), this protein is Trypsin Tyr p 3.0101.